The sequence spans 340 residues: Delta(1)-pyrroline-2-carboxylate reductase 2 (340 aa).

Ser50 functions as the Charge relay system in the catalytic mechanism. The Proton donor role is filled by His51. Position 55 (Arg55) interacts with substrate. 123–127 (HFSAL) is a binding site for NADP(+). Thr163 serves as a coordination point for substrate. 181-183 (DFA) is a binding site for NADP(+). 189–190 (RG) contacts substrate. Asp191 (charge relay system) is an active-site residue. NADP(+) contacts are provided by residues 232 to 233 (HK) and 307 to 313 (RLPSQRR).

It belongs to the LDH2/MDH2 oxidoreductase family. In terms of assembly, homodimer.

It carries out the reaction L-proline + NAD(+) = 1-pyrroline-2-carboxylate + NADH + H(+). It catalyses the reaction L-proline + NADP(+) = 1-pyrroline-2-carboxylate + NADPH + H(+). In terms of biological role, catalyzes the reduction of Delta(1)-pyrroline-2-carboxylate (Pyr2C) to L-proline, using NADPH as the electron donor. May be involved in a degradation pathway that converts trans-3-hydroxy-L-proline (t3LHyp) to L-proline. The polypeptide is Delta(1)-pyrroline-2-carboxylate reductase 2 (Burkholderia multivorans (strain ATCC 17616 / 249)).